The following is a 188-amino-acid chain: MNLSATILLAFGMSMDAFAASIGKGATLHKPKFSEAVRTGLIFGAIETLTPLVGWGLGMLASQFILEWNHWIAFILLVFLGGRMIVEGFRGDSDEACEAPHRHGFWLLVTTAFATSLDAMAVGVGLAFLQVSIVTTALAIGCATFIMSTLGMMVGRFIGPLLGKRAEILGGIVLIGIGSEILWSHFAG.

The next 6 membrane-spanning stretches (helical) occupy residues 3-23 (LSATILLAFGMSMDAFAASIG), 41-61 (LIFGAIETLTPLVGWGLGMLA), 62-82 (SQFILEWNHWIAFILLVFLGG), 107-129 (LLVTTAFATSLDAMAVGVGLAFL), 143-163 (ATFIMSTLGMMVGRFIGPLLG), and 168-188 (ILGGIVLIGIGSEILWSHFAG).

Belongs to the MntP (TC 9.B.29) family.

Its subcellular location is the cell inner membrane. Functionally, probably functions as a manganese efflux pump. This is Putative manganese efflux pump MntP from Klebsiella pneumoniae subsp. pneumoniae (strain ATCC 700721 / MGH 78578).